The following is a 571-amino-acid chain: Proline--tRNA ligase (571 aa).

Belongs to the class-II aminoacyl-tRNA synthetase family. ProS type 1 subfamily. Homodimer.

It is found in the cytoplasm. It carries out the reaction tRNA(Pro) + L-proline + ATP = L-prolyl-tRNA(Pro) + AMP + diphosphate. Functionally, catalyzes the attachment of proline to tRNA(Pro) in a two-step reaction: proline is first activated by ATP to form Pro-AMP and then transferred to the acceptor end of tRNA(Pro). As ProRS can inadvertently accommodate and process non-cognate amino acids such as alanine and cysteine, to avoid such errors it has two additional distinct editing activities against alanine. One activity is designated as 'pretransfer' editing and involves the tRNA(Pro)-independent hydrolysis of activated Ala-AMP. The other activity is designated 'posttransfer' editing and involves deacylation of mischarged Ala-tRNA(Pro). The misacylated Cys-tRNA(Pro) is not edited by ProRS. This Stutzerimonas stutzeri (strain A1501) (Pseudomonas stutzeri) protein is Proline--tRNA ligase.